Reading from the N-terminus, the 176-residue chain is Cytochrome b (176 aa).

Helical transmembrane passes span 33-53 (FGSL…FLAM), 77-98 (WLLR…YLHI), and 113-133 (WNVG…GYVL). Heme b is bound by residues His83 and His97.

The protein belongs to the cytochrome b family. The cytochrome bc1 complex contains 11 subunits: 3 respiratory subunits (MT-CYB, CYC1 and UQCRFS1), 2 core proteins (UQCRC1 and UQCRC2) and 6 low-molecular weight proteins (UQCRH/QCR6, UQCRB/QCR7, UQCRQ/QCR8, UQCR10/QCR9, UQCR11/QCR10 and a cleavage product of UQCRFS1). This cytochrome bc1 complex then forms a dimer. It depends on heme b as a cofactor.

It localises to the mitochondrion inner membrane. Component of the ubiquinol-cytochrome c reductase complex (complex III or cytochrome b-c1 complex) that is part of the mitochondrial respiratory chain. The b-c1 complex mediates electron transfer from ubiquinol to cytochrome c. Contributes to the generation of a proton gradient across the mitochondrial membrane that is then used for ATP synthesis. In Eumops perotis (Western bonneted bat), this protein is Cytochrome b (MT-CYB).